A 262-amino-acid polypeptide reads, in one-letter code: Nurim (262 aa).

Over 1–4 (MAPA) the chain is Nuclear. Residues 5–28 (LLLVPAALASFILAFGTGVEFVRF) traverse the membrane as a helical segment. Over 29 to 58 (TSLRPLLGGIPESGGPDARQGWLAALQDRS) the chain is Perinuclear space. A helical membrane pass occupies residues 59–80 (ILAPLAWDLGLLLLFVGQHSLM). At 81-97 (AAERVKAWTSRYFGVLQ) the chain is on the nuclear side. The chain crosses the membrane as a helical span at residues 98–114 (RSLYVACTALALQLVMR). The Perinuclear space portion of the chain corresponds to 115–133 (YWEPIPKGPVLWEARAEPW). Residues 134-164 (ATWVPLLCFVLHVISWLLIFSILLVFDYAEL) traverse the membrane as a helical segment. Topologically, residues 165-191 (MGLKQVYYHVLGLGEPLALKSPRALRL) are nuclear. Residues 192–210 (FSHLRHPVCVELLTVLWVV) form a helical membrane-spanning segment. Residues 211 to 216 (PTLGTD) lie on the Perinuclear space side of the membrane. The chain crosses the membrane as a helical span at residues 217–234 (RLLLAFLLTLYLGLAHGL). At 235–262 (DQQDLRYLRAQLQRKLHLLSRPQDGEAE) the chain is on the nuclear side.

The protein belongs to the nurim family.

Its subcellular location is the nucleus inner membrane. In Pan troglodytes (Chimpanzee), this protein is Nurim (NRM).